The following is a 249-amino-acid chain: DnaJ homolog subfamily C member 5 homolog (249 aa).

Ser12 bears the Phosphoserine mark. Phosphothreonine is present on Thr13. Phosphoserine occurs at positions 14 and 17. A J domain is found at 15-84 (GDSLYEILGL…RNIYDNYGSL (70 aa)). Tyr19 carries the phosphotyrosine modification. Basic and acidic residues predominate over residues 146–162 (HDQYSHLNRPDGNREGN). Disordered stretches follow at residues 146–177 (HDQY…LEDV) and 218–249 (PFTG…NQKY). The segment covering 227 to 241 (NENTSLNTTEQTTYT) has biased composition (polar residues).

Fatty acylated. Heavily palmitoylated in the cysteine string motif. As to expression, expressed in wide range of synaptic terminals: embryonic nervous system, larval neuromuscular junctions, adult visual system (neuropil of optic ganglia and terminal of R1-8 photoreceptors) and thoracic neuromuscular junctions. Also expressed in non-neuronal cells: follicle cells, spermatheca, testis and ejaculatory bulb. Low level of expression is found in many neuronal and non-neuronal tissues.

The protein localises to the membrane. Its function is as follows. May have an important role in presynaptic function. This chain is DnaJ homolog subfamily C member 5 homolog, found in Drosophila melanogaster (Fruit fly).